Reading from the N-terminus, the 463-residue chain is Sialic acid-binding Ig-like lectin 9 (463 aa).

Residues Met-1–Gly-17 form the signal peptide. Residues Gln-18–Gly-348 are Extracellular-facing. In terms of domain architecture, Ig-like V-type spans Ser-20–Thr-140. 3 cysteine pairs are disulfide-bonded: Cys-36/Cys-170, Cys-41/Cys-102, and Cys-164/Cys-213. A glycan (N-linked (GlcNAc...) asparagine) is linked at Asn-101. Arg-120 contributes to the N-acetylneuraminate binding site. N-linked (GlcNAc...) asparagine glycans are attached at residues Asn-138 and Asn-161. The 84-residue stretch at Pro-146–His-229 folds into the Ig-like C2-type 1 domain. N-linked (GlcNAc...) asparagine glycosylation is found at Asn-225, Asn-231, Asn-238, and Asn-256. One can recognise an Ig-like C2-type 2 domain in the interval Pro-236–Ser-336. Cys-272 and Cys-320 form a disulfide bridge. A glycan (N-linked (GlcNAc...) asparagine) is linked at Asn-334. Residues Val-349–Val-369 form a helical membrane-spanning segment. Residues Val-370–Arg-463 are Cytoplasmic-facing. Residues Pro-380–Glu-428 form a disordered region. Positions Leu-431–Leu-436 match the ITIM motif motif. The tract at residues Trp-444–Arg-463 is disordered. Positions Thr-454–Ile-459 match the SLAM-like motif motif.

It belongs to the immunoglobulin superfamily. SIGLEC (sialic acid binding Ig-like lectin) family. Expressed by peripheral blood leukocytes (neutrophils and monocytes but not eosinophils). Found in liver, fetal liver, bone marrow, placenta, spleen and in lower levels in skeletal muscle, fetal brain, stomach, lung, thymus, prostate, brain, mammary, adrenal gland, colon, trachea, cerebellum, testis, small intestine and spinal cordon.

It localises to the membrane. Its function is as follows. Putative adhesion molecule that mediates sialic-acid dependent binding to cells. Preferentially binds to alpha-2,3- or alpha-2,6-linked sialic acid. The sialic acid recognition site may be masked by cis interactions with sialic acids on the same cell surface. The protein is Sialic acid-binding Ig-like lectin 9 (SIGLEC9) of Homo sapiens (Human).